We begin with the raw amino-acid sequence, 95 residues long: Co-chaperonin GroES (95 aa).

It belongs to the GroES chaperonin family. In terms of assembly, heptamer of 7 subunits arranged in a ring. Interacts with the chaperonin GroEL.

It is found in the cytoplasm. Its function is as follows. Together with the chaperonin GroEL, plays an essential role in assisting protein folding. The GroEL-GroES system forms a nano-cage that allows encapsulation of the non-native substrate proteins and provides a physical environment optimized to promote and accelerate protein folding. GroES binds to the apical surface of the GroEL ring, thereby capping the opening of the GroEL channel. This is Co-chaperonin GroES from Chlorobium limicola (strain DSM 245 / NBRC 103803 / 6330).